A 359-amino-acid polypeptide reads, in one-letter code: Peptide chain release factor 1 (359 aa).

Q236 carries the N5-methylglutamine modification. The segment at 288 to 308 (QDEQDAERKSTIGTGDRSERI) is disordered. Basic and acidic residues predominate over residues 293 to 308 (AERKSTIGTGDRSERI).

This sequence belongs to the prokaryotic/mitochondrial release factor family. Methylated by PrmC. Methylation increases the termination efficiency of RF1.

The protein resides in the cytoplasm. Its function is as follows. Peptide chain release factor 1 directs the termination of translation in response to the peptide chain termination codons UAG and UAA. In Streptococcus uberis (strain ATCC BAA-854 / 0140J), this protein is Peptide chain release factor 1.